Consider the following 259-residue polypeptide: PKHD-type hydroxylase PsycPRwf_1523 (259 aa).

The Fe2OG dioxygenase domain maps to 80-180 (VIMPPLFSAY…RLAMVTWVQS (101 aa)). Positions 98, 100, and 161 each coordinate Fe cation. Residue R171 participates in 2-oxoglutarate binding.

Fe(2+) serves as cofactor. It depends on L-ascorbate as a cofactor.

The polypeptide is PKHD-type hydroxylase PsycPRwf_1523 (Psychrobacter sp. (strain PRwf-1)).